The sequence spans 293 residues: Haloalkane dehalogenase (293 aa).

Residues 34–158 enclose the AB hydrolase-1 domain; sequence PVLFLHGNPT…FQAFRTADVG (125 aa). The active-site Nucleophile is D106. E130 serves as the catalytic Proton donor. H272 functions as the Proton acceptor in the catalytic mechanism.

This sequence belongs to the haloalkane dehalogenase family. Type 2 subfamily. Monomer.

It catalyses the reaction 1-haloalkane + H2O = a halide anion + a primary alcohol + H(+). It participates in xenobiotic degradation; haloalkane degradation. The protein operates within xenobiotic degradation; 1,3-dichloropropene degradation. Functionally, catalyzes hydrolytic cleavage of carbon-halogen bonds in halogenated aliphatic compounds, leading to the formation of the corresponding primary alcohols, halide ions and protons. Has a broad substrate specificity, as it is able to dehalogenate mono- and di- chlorinated and brominated alkanes (up to at least C10), and the two isomers of 1,3-dichloropropene to 3-chloroallyl alcohol; the highest activity was found with 1,2-dibromoethane, while no activity was observed with the analog 1,2-dichloroethane. This Pseudomonas pavonaceae protein is Haloalkane dehalogenase (dhaA).